The chain runs to 929 residues: Valine--tRNA ligase (929 aa).

The 'HIGH' region motif lies at 40 to 50 (PNVTGHLHMGH). Residues 522 to 526 (KMSKS) carry the 'KMSKS' region motif. Residue Lys-525 participates in ATP binding. A coiled-coil region spans residues 855–926 (LAGLIDKEAE…LEQQHAEITD (72 aa)).

The protein belongs to the class-I aminoacyl-tRNA synthetase family. ValS type 1 subfamily. As to quaternary structure, monomer.

It is found in the cytoplasm. It carries out the reaction tRNA(Val) + L-valine + ATP = L-valyl-tRNA(Val) + AMP + diphosphate. Functionally, catalyzes the attachment of valine to tRNA(Val). As ValRS can inadvertently accommodate and process structurally similar amino acids such as threonine, to avoid such errors, it has a 'posttransfer' editing activity that hydrolyzes mischarged Thr-tRNA(Val) in a tRNA-dependent manner. The polypeptide is Valine--tRNA ligase (Nitrosococcus oceani (strain ATCC 19707 / BCRC 17464 / JCM 30415 / NCIMB 11848 / C-107)).